The sequence spans 108 residues: Ig kappa chain V region 120 (108 aa).

The tract at residues 1–23 (AFELTQTPSSVEAAVGGTVTIKC) is framework-1. A complementarity-determining-1 region spans residues 24–34 (QSSQSIGTYLA). Residues 35–49 (WYZZKPGQPPKLLIY) form a framework-2 region. The segment at 50-56 (RASTLAS) is complementarity-determining-2. The interval 57-88 (GVSSRFKGSGSGTEFTLTISGVECADAATYYC) is framework-3. Residues 89-97 (QGTYYZSAS) form a complementarity-determining-3 region. Residues 98-107 (FGGGTEVVVK) are framework-4.

The protein is Ig kappa chain V region 120 of Oryctolagus cuniculus (Rabbit).